Here is a 416-residue protein sequence, read N- to C-terminus: CinA-like protein (416 aa).

Belongs to the CinA family.

In Rippkaea orientalis (strain PCC 8801 / RF-1) (Cyanothece sp. (strain PCC 8801)), this protein is CinA-like protein.